A 134-amino-acid polypeptide reads, in one-letter code: Small ribosomal subunit protein bS6 (134 aa).

It belongs to the bacterial ribosomal protein bS6 family.

Binds together with bS18 to 16S ribosomal RNA. The chain is Small ribosomal subunit protein bS6 from Pelodictyon phaeoclathratiforme (strain DSM 5477 / BU-1).